The primary structure comprises 423 residues: MDQPVLYNQPAFPNFSYSPGLGQEGGNYQYLGNYNAPSYPQPFFHVPPAIKSEYGAQDEVTGGSCHAAPFDWHLYPHFQFSNQVGALSSGDPSPEGRNEEDHGSISEERSSGTPSPNSPMVPSYAQYWHHAPWQGNPTGQALGLPSRAHPDGGEKPQQSDCSPTASLESGASNTEDEEVSSALSSRAERGLCSPSPNNASFGSGNEEDGTTLEEMEEFAKELKQKRVALGYTQGDIGHALGILYGKMFSQTTICRFESLQLTFKNMCKLKPLLEQWLGEAENNDNLQEMIHKAQLEEQNRKRKMRTCFDSVLKGRLEGHFMCNQKPGARELAEIAKELGLEKDVVRVWFCNRRQKEKSKSRMSKAHEFVGGASPVPSPAEHISQDYGLAPLHPNRPPFYPPPFPRNDLFPHMVPGMSMGVLTG.

The tract at residues 85–211 (GALSSGDPSP…GSGNEEDGTT (127 aa)) is disordered. The span at 94–110 (PEGRNEEDHGSISEERS) shows a compositional bias: basic and acidic residues. 3 stretches are compositionally biased toward polar residues: residues 111–120 (SGTPSPNSPM), 156–173 (PQQSDCSPTASLESGASN), and 194–203 (PSPNNASFGS). The 75-residue stretch at 207 to 281 (EDGTTLEEME…LLEQWLGEAE (75 aa)) folds into the POU-specific domain. The segment at residues 301 to 360 (KRKMRTCFDSVLKGRLEGHFMCNQKPGARELAEIAKELGLEKDVVRVWFCNRRQKEKSKS) is a DNA-binding region (homeobox).

This sequence belongs to the POU transcription factor family. Class-5 subfamily. As to quaternary structure, interacts with the transcription factors tcf7l1/tcf3 and vegt.

It is found in the nucleus. Its function is as follows. Transcription factor that binds to the octamer motif (5'-ATTTGCAT-3'). Antagonizes the activity of nodal/activin signaling during gastrulation to suppress mesendoderm formation. Acts maternally to inhibit vegt and beta-catenin-activated gene transcription, probably by forming a transcriptional repression complex on the promoters of target genes. Binds to an octamer motif in interspersed RNA. This chain is POU domain, class 5, transcription factor 1.3 (pou5f1.3), found in Xenopus tropicalis (Western clawed frog).